A 102-amino-acid chain; its full sequence is Small ribosomal subunit protein uS10 (102 aa).

This sequence belongs to the universal ribosomal protein uS10 family. Part of the 30S ribosomal subunit.

In terms of biological role, involved in the binding of tRNA to the ribosomes. The sequence is that of Small ribosomal subunit protein uS10 from Streptococcus thermophilus (strain ATCC BAA-250 / LMG 18311).